A 500-amino-acid chain; its full sequence is Probable cytosol aminopeptidase (500 aa).

Residues K264 and D269 each coordinate Mn(2+). K276 is an active-site residue. D287, D346, and E348 together coordinate Mn(2+). R350 is a catalytic residue.

It belongs to the peptidase M17 family. Requires Mn(2+) as cofactor.

Its subcellular location is the cytoplasm. It carries out the reaction Release of an N-terminal amino acid, Xaa-|-Yaa-, in which Xaa is preferably Leu, but may be other amino acids including Pro although not Arg or Lys, and Yaa may be Pro. Amino acid amides and methyl esters are also readily hydrolyzed, but rates on arylamides are exceedingly low.. The catalysed reaction is Release of an N-terminal amino acid, preferentially leucine, but not glutamic or aspartic acids.. In terms of biological role, presumably involved in the processing and regular turnover of intracellular proteins. Catalyzes the removal of unsubstituted N-terminal amino acids from various peptides. The sequence is that of Probable cytosol aminopeptidase from Nitrobacter hamburgensis (strain DSM 10229 / NCIMB 13809 / X14).